A 236-amino-acid chain; its full sequence is MKTIVVCSGGLDSVSLAHKMAAEQQLIGLVSFDYGQRHRKELDFAARCAARLAVPHHIIDIAAIGGHLSGSALTDNVEVPDGHYAEETMKATVVPNRNAIMLAIAFGLAAAQKADAVAVAVHGGDHFIYPDCRPGFIDAFQRMQNAALDGYASVRLLAPYVDVSKAAIVADGEKHATPFAETWSCYKGGRLHCGRCGTCVERREAFHLAGISDPTDYEDRDFWKAAVSQYSAKEVR.

7 to 17 (CSGGLDSVSLA) serves as a coordination point for ATP. Residues cysteine 185, cysteine 193, cysteine 196, and cysteine 199 each contribute to the Zn(2+) site.

It belongs to the QueC family. The cofactor is Zn(2+).

The catalysed reaction is 7-carboxy-7-deazaguanine + NH4(+) + ATP = 7-cyano-7-deazaguanine + ADP + phosphate + H2O + H(+). It functions in the pathway purine metabolism; 7-cyano-7-deazaguanine biosynthesis. Functionally, catalyzes the ATP-dependent conversion of 7-carboxy-7-deazaguanine (CDG) to 7-cyano-7-deazaguanine (preQ(0)). The protein is 7-cyano-7-deazaguanine synthase of Rhizobium etli (strain CIAT 652).